Reading from the N-terminus, the 338-residue chain is Ferredoxin--NADP reductase (338 aa).

The FAD site is built by Asp-32, Gln-40, Tyr-45, Val-85, Phe-120, Asp-287, and Thr-327.

This sequence belongs to the ferredoxin--NADP reductase type 2 family. Homodimer. It depends on FAD as a cofactor.

It carries out the reaction 2 reduced [2Fe-2S]-[ferredoxin] + NADP(+) + H(+) = 2 oxidized [2Fe-2S]-[ferredoxin] + NADPH. This is Ferredoxin--NADP reductase from Wolbachia pipientis wMel.